Consider the following 120-residue polypeptide: Ribonuclease P protein component (120 aa).

The protein belongs to the RnpA family. As to quaternary structure, consists of a catalytic RNA component (M1 or rnpB) and a protein subunit.

The catalysed reaction is Endonucleolytic cleavage of RNA, removing 5'-extranucleotides from tRNA precursor.. In terms of biological role, RNaseP catalyzes the removal of the 5'-leader sequence from pre-tRNA to produce the mature 5'-terminus. It can also cleave other RNA substrates such as 4.5S RNA. The protein component plays an auxiliary but essential role in vivo by binding to the 5'-leader sequence and broadening the substrate specificity of the ribozyme. In Blochmanniella floridana, this protein is Ribonuclease P protein component.